The chain runs to 207 residues: Ribosomal RNA small subunit methyltransferase G (207 aa).

Residues G73, L78, 124 to 125 (VE), and R139 contribute to the S-adenosyl-L-methionine site.

This sequence belongs to the methyltransferase superfamily. RNA methyltransferase RsmG family.

Its subcellular location is the cytoplasm. It catalyses the reaction guanosine(527) in 16S rRNA + S-adenosyl-L-methionine = N(7)-methylguanosine(527) in 16S rRNA + S-adenosyl-L-homocysteine. In terms of biological role, specifically methylates the N7 position of guanine in position 527 of 16S rRNA. In Shigella flexneri, this protein is Ribosomal RNA small subunit methyltransferase G.